A 276-amino-acid polypeptide reads, in one-letter code: Natural cytotoxicity triggering receptor 2 (276 aa).

The first 21 residues, 1–21 (MAWRALHPLLLLLLLFPGSQA), serve as a signal peptide directing secretion. Positions 22–120 (QSKAQVLQSV…IYRPSDNSVS (99 aa)) constitute an Ig-like domain. The Extracellular segment spans residues 22-192 (QSKAQVLQSV…LRPGPAAPIA (171 aa)). 2 disulfide bridges follow: Cys40/Cys109 and Cys55/Cys63. Polar residues-rich tracts occupy residues 138–156 (TSWT…QSCV) and 167–183 (ESPS…NSTL). Positions 138-184 (TSWTPRDLVSSQTQTQSCVPPTAGARQAPESPSTIPVPSQPQNSTLR) are disordered. Asn180 carries N-linked (GlcNAc...) asparagine glycosylation. The helical transmembrane segment at 193-213 (LVPVFCGLLVAKSLVLSALLV) threads the bilayer. Topologically, residues 214-276 (WWGDIWWKTM…ISDDDDEHTL (63 aa)) are cytoplasmic.

Belongs to the natural cytotoxicity receptor (NCR) family. As to quaternary structure, interacts with TYROBP/DAP12. Interacts with KMT2E isoform NKp44L. Selectively expressed by activated NK cells and by in vitro cultured (i.e. activated) TCRg/d lymphoid cells.

Its subcellular location is the cell membrane. Cytotoxicity-activating receptor that may contribute to the increased efficiency of activated natural killer (NK) cells to mediate tumor cell lysis. In Homo sapiens (Human), this protein is Natural cytotoxicity triggering receptor 2 (NCR2).